We begin with the raw amino-acid sequence, 55 residues long: Large ribosomal subunit protein bL33 (55 aa).

The protein belongs to the bacterial ribosomal protein bL33 family.

This chain is Large ribosomal subunit protein bL33, found in Ruegeria sp. (strain TM1040) (Silicibacter sp.).